A 346-amino-acid polypeptide reads, in one-letter code: MLFDALLVLSFGGPEGPDQVMPFLENVTRGRGIPRERLASVAEHYLHFGGVSPINGINRALIAEIEAELGDRGETLPVYFGNRNWDPYVEDAVTAMRDDGVRRAAVFATSAWGGYSSCTQYNEDIARGRAAAGDGAPQLVKLRHYFDHPLLVEMFAESISVAAQSLPADVRDEARLVFTAHSIPVAADDRHGPNLYSRQVAYATRLVAAAAGYSEFDQVWQSRSGPPRIPWLEPDIGDHVTALAERGTKAVIICPIGFVADHIEVVWDLDSEVREQAADLGIAMARARTPNADRRYARLALDLVDELRGDRDPLRVAGVDPAPGCGYSVDGTTCADSPRCVARITG.

Fe-coproporphyrin III is bound by residues Ser52 and Tyr121. 2 residues coordinate Fe(2+): His181 and Glu264.

This sequence belongs to the ferrochelatase family.

It localises to the cytoplasm. The enzyme catalyses Fe-coproporphyrin III + 2 H(+) = coproporphyrin III + Fe(2+). It functions in the pathway porphyrin-containing compound metabolism; protoheme biosynthesis. Functionally, involved in coproporphyrin-dependent heme b biosynthesis. Catalyzes the insertion of ferrous iron into coproporphyrin III to form Fe-coproporphyrin III. This Mycobacterium sp. (strain KMS) protein is Coproporphyrin III ferrochelatase.